Reading from the N-terminus, the 50-residue chain is Apoptotic protease-activating factor 1 (50 aa).

The CARD domain maps to 1–31; that stretch reads ILKKDNYSYISFYNALIHEGYKDLAALLHSG. The NB-ARC domain occupies 46–50; sequence GGITS.

Monomer. Oligomerizes to a heptameric ring, known as the apoptosome, upon binding of cytochrome c and dATP. Oligomeric Apaf-1 and pro-caspase-9 bind to each other via their respective NH2-terminal CARD domains and consecutively mature caspase-9 is released from the complex. Interacts with APIP. Interacts (via CARD and NACHT domains) with NAIP/BIRC1 (via NACHT domain). Interacts with CIAO2A.

Oligomeric Apaf-1 mediates the cytochrome c-dependent autocatalytic activation of pro-caspase 9 (Apaf-3), leading to the activation of caspase-3 and apoptosis. This activation requires ATP. The chain is Apoptotic protease-activating factor 1 (APAF1) from Canis lupus familiaris (Dog).